The sequence spans 1339 residues: Aldehyde oxidase 1 (1339 aa).

The 2Fe-2S ferredoxin-type domain occupies 5–92; sequence SELLFYVNGR…GAAVTTVEGI (88 aa). Positions 44, 49, 52, and 74 each coordinate [2Fe-2S] cluster. Glutamine 113 provides a ligand contact to Mo-molybdopterin. [2Fe-2S] cluster contacts are provided by cysteine 114, cysteine 117, cysteine 149, and cysteine 151. Cysteine 151 lines the Mo-molybdopterin pocket. The region spanning 236–421 is the FAD-binding PCMH-type domain; that stretch reads FGSDRMTWIS…ISVNIPYSRK (186 aa). Residues 264–271, alanine 345, serine 354, histidine 358, aspartate 367, and leucine 411 contribute to the FAD site; that span reads VVMGNTSV. Residues 807–808 and methionine 1048 each bind Mo-molybdopterin; that span reads AF. Phosphoserine is present on serine 1069. Residues 1089 to 1092, glutamine 1204, and leucine 1269 contribute to the Mo-molybdopterin site; that span reads GSVV. Glutamate 1271 acts as the Proton acceptor; for azaheterocycle hydroxylase activity in catalysis.

It belongs to the xanthine dehydrogenase family. As to quaternary structure, homodimer. It depends on [2Fe-2S] cluster as a cofactor. The cofactor is FAD. Requires Mo-molybdopterin as cofactor. Post-translationally, the N-terminus is blocked. Expressed at high levels in liver, lung and spleen. Also expressed in kindey, eye, testis, duodenum, esophagus and thymus (at protein level).

It localises to the cytoplasm. The enzyme catalyses an aldehyde + O2 + H2O = a carboxylate + H2O2 + H(+). It carries out the reaction retinal + O2 + H2O = retinoate + H2O2 + H(+). Oxidase with broad substrate specificity, oxidizing aromatic azaheterocycles, such as N1-methylnicotinamide, N-methylphthalazinium and phthalazine, as well as aldehydes, such as benzaldehyde, retinal, pyridoxal, and vanillin. Plays a key role in the metabolism of xenobiotics and drugs containing aromatic azaheterocyclic substituents. Is probably involved in the regulation of reactive oxygen species homeostasis. May be a prominent source of superoxide generation via the one-electron reduction of molecular oxygen. May also catalyze nitric oxide (NO) production via the reduction of nitrite to NO with NADH or aldehyde as electron donor. May play a role in adipogenesis. This is Aldehyde oxidase 1 from Bos taurus (Bovine).